Here is a 134-residue protein sequence, read N- to C-terminus: Phosphomevalonate dehydratase small subunit (134 aa).

The Proton acceptor role is filled by Ser62.

This sequence belongs to the AcnX type II small subunit family. Heterodimer composed of a large subunit (PMDh-L) and a small subunit (PMDh-S).

It carries out the reaction (R)-5-phosphomevalonate = (2E)-3-methyl-5-phosphooxypent-2-enoate + H2O. It functions in the pathway isoprenoid biosynthesis; isopentenyl diphosphate biosynthesis via mevalonate pathway. Its function is as follows. Component of a hydro-lyase that catalyzes the dehydration of mevalonate 5-phosphate (MVA5P) to form trans-anhydromevalonate 5-phosphate (tAHMP). Involved in the archaeal mevalonate (MVA) pathway, which provides fundamental precursors for isoprenoid biosynthesis, such as isopentenyl diphosphate (IPP) and dimethylallyl diphosphate (DMAPP). In Pyrococcus furiosus (strain ATCC 43587 / DSM 3638 / JCM 8422 / Vc1), this protein is Phosphomevalonate dehydratase small subunit.